Here is a 146-residue protein sequence, read N- to C-terminus: Hemoglobin subunit beta (146 aa).

Position 1 is an N-acetylvaline (Val1). Residues 2–146 enclose the Globin domain; it reads HLTDAEKALV…VATALAHKYH (145 aa). A Phosphothreonine modification is found at Thr12. Ser44 carries the phosphoserine modification. Residue Lys59 is modified to N6-acetyllysine. His63 contacts heme b. Lys82 is subject to N6-acetyllysine. Residue His92 participates in heme b binding. Cys93 bears the S-nitrosocysteine mark. Lys144 is modified (N6-acetyllysine).

This sequence belongs to the globin family. As to quaternary structure, heterotetramer of two alpha chains and two beta chains. As to expression, red blood cells.

Its function is as follows. Involved in oxygen transport from the lung to the various peripheral tissues. This is Hemoglobin subunit beta from Peromyscus californicus (California mouse).